The sequence spans 209 residues: uncharacterized protein (209 aa).

The FCP1 homology domain occupies 1 to 199 (MQVFLDLDET…DELKRVTASL (199 aa)).

This is an uncharacterized protein from Dryophytes versicolor (chameleon treefrog).